Reading from the N-terminus, the 149-residue chain is uncharacterized protein (149 aa).

The interval 1–103 (MFGLKVKNAE…SPTQGSRLRH (103 aa)) is disordered. Residues 7-18 (KNAEADTAKSNE) are compositionally biased toward basic and acidic residues. Low complexity predominate over residues 26–41 (TGSSTTSGSGQSTQRG). The span at 61–72 (GSQGNSGDQGTE) shows a compositional bias: polar residues.

The protein belongs to the adhesin P1 family.

This is an uncharacterized protein from Mycoplasma pneumoniae (strain ATCC 29342 / M129 / Subtype 1) (Mycoplasmoides pneumoniae).